The sequence spans 309 residues: Wnt inhibitor of Dorsal protein (309 aa).

Positions 1–16 (MIFAITFFMGITSTLA) are cleaved as a signal peptide. Cystine bridges form between Cys-51/Cys-62, Cys-102/Cys-110, Cys-112/Cys-121, Cys-162/Cys-179, Cys-164/Cys-174, Cys-232/Cys-269, Cys-248/Cys-262, Cys-266/Cys-308, Cys-284/Cys-299, and Cys-286/Cys-296.

This sequence belongs to the Wnt family.

It is found in the secreted. The protein localises to the extracellular space. It localises to the extracellular matrix. Binds as a ligand to a family of frizzled seven-transmembrane receptors and acts through a cascade of genes on the nucleus. This is Wnt inhibitor of Dorsal protein (wntD) from Drosophila melanogaster (Fruit fly).